The chain runs to 313 residues: Porphobilinogen deaminase (313 aa).

Cysteine 242 bears the S-(dipyrrolylmethanemethyl)cysteine mark.

Belongs to the HMBS family. As to quaternary structure, monomer. The cofactor is dipyrromethane.

The enzyme catalyses 4 porphobilinogen + H2O = hydroxymethylbilane + 4 NH4(+). It participates in porphyrin-containing compound metabolism; protoporphyrin-IX biosynthesis; coproporphyrinogen-III from 5-aminolevulinate: step 2/4. In terms of biological role, tetrapolymerization of the monopyrrole PBG into the hydroxymethylbilane pre-uroporphyrinogen in several discrete steps. The sequence is that of Porphobilinogen deaminase from Pectobacterium atrosepticum (strain SCRI 1043 / ATCC BAA-672) (Erwinia carotovora subsp. atroseptica).